We begin with the raw amino-acid sequence, 269 residues long: Indole-3-glycerol phosphate synthase (269 aa).

It belongs to the TrpC family.

The enzyme catalyses 1-(2-carboxyphenylamino)-1-deoxy-D-ribulose 5-phosphate + H(+) = (1S,2R)-1-C-(indol-3-yl)glycerol 3-phosphate + CO2 + H2O. The protein operates within amino-acid biosynthesis; L-tryptophan biosynthesis; L-tryptophan from chorismate: step 4/5. The polypeptide is Indole-3-glycerol phosphate synthase (Roseiflexus sp. (strain RS-1)).